Reading from the N-terminus, the 86-residue chain is MKPNIHPPYRTVVFHDTSADAYFTVGSTIATERTIERDGQTYPYVTLDISSASHPYYTGKQKEFAKEGSTARFHQRFGSFLTKKTN.

Belongs to the bacterial ribosomal protein bL31 family. Type B subfamily. As to quaternary structure, part of the 50S ribosomal subunit.

The chain is Large ribosomal subunit protein bL31B from Yersinia pseudotuberculosis serotype O:1b (strain IP 31758).